Here is a 667-residue protein sequence, read N- to C-terminus: UvrABC system protein C (667 aa).

The 80-residue stretch at 43–122 (AEPGCYLMRD…IKNQQPHFNV (80 aa)) folds into the GIY-YIG domain. Residues 232 to 267 (QELKVLLEKQMERYSDRMDYESAANIRDQIKGLEQL) form the UVR domain.

Belongs to the UvrC family. As to quaternary structure, interacts with UvrB in an incision complex.

It localises to the cytoplasm. Functionally, the UvrABC repair system catalyzes the recognition and processing of DNA lesions. UvrC both incises the 5' and 3' sides of the lesion. The N-terminal half is responsible for the 3' incision and the C-terminal half is responsible for the 5' incision. The polypeptide is UvrABC system protein C (Prochlorococcus marinus (strain MIT 9313)).